The primary structure comprises 121 residues: Small ribosomal subunit protein uS13 (121 aa).

The interval 91-121 (HRMSLPVRGQRTRTNARTRRGSRKTVAGRKK) is disordered. Positions 100 to 121 (QRTRTNARTRRGSRKTVAGRKK) are enriched in basic residues.

It belongs to the universal ribosomal protein uS13 family. In terms of assembly, part of the 30S ribosomal subunit. Forms a loose heterodimer with protein S19. Forms two bridges to the 50S subunit in the 70S ribosome.

Functionally, located at the top of the head of the 30S subunit, it contacts several helices of the 16S rRNA. In the 70S ribosome it contacts the 23S rRNA (bridge B1a) and protein L5 of the 50S subunit (bridge B1b), connecting the 2 subunits; these bridges are implicated in subunit movement. Contacts the tRNAs in the A and P-sites. This chain is Small ribosomal subunit protein uS13, found in Prochlorococcus marinus (strain MIT 9515).